The following is a 155-amino-acid chain: MVNAVAVLKGDSSVSGIVRFEQESEDQQTKISWEITGNDANALRGFHIHTFGDNTNGCTSAGPHFNPFNKNHGAPEDEERHVGDLGNIPTDAQGISKGSLTDKHIKLLGPLSIVGRTVVVHAGQDDLGKGGDAESLKTGNAGARHACGVIGISNA.

Cu cation-binding residues include His47, His49, and His64. Cys58 and Cys147 are joined by a disulfide. Residues His64, His72, His81, and Asp84 each contribute to the Zn(2+) site. His121 is a binding site for Cu cation. A substrate-binding site is contributed by Arg144.

Belongs to the Cu-Zn superoxide dismutase family. In terms of assembly, homodimer. Cu cation is required as a cofactor. The cofactor is Zn(2+).

The protein resides in the cytoplasm. It catalyses the reaction 2 superoxide + 2 H(+) = H2O2 + O2. Functionally, destroys radicals which are normally produced within the cells and which are toxic to biological systems. The sequence is that of Superoxide dismutase [Cu-Zn] (SOD1) from Kluyveromyces lactis (strain ATCC 8585 / CBS 2359 / DSM 70799 / NBRC 1267 / NRRL Y-1140 / WM37) (Yeast).